The sequence spans 332 residues: Anthranilate phosphoribosyltransferase (332 aa).

Residues glycine 78, 81–82, threonine 86, 88–91, 106–114, and alanine 118 contribute to the 5-phospho-alpha-D-ribose 1-diphosphate site; these read GD, NVST, and KHGNRAASS. An anthranilate-binding site is contributed by glycine 78. Residue serine 90 coordinates Mg(2+). Asparagine 109 lines the anthranilate pocket. Anthranilate is bound at residue arginine 164. The Mg(2+) site is built by aspartate 223 and glutamate 224.

It belongs to the anthranilate phosphoribosyltransferase family. As to quaternary structure, homodimer. Mg(2+) is required as a cofactor.

It carries out the reaction N-(5-phospho-beta-D-ribosyl)anthranilate + diphosphate = 5-phospho-alpha-D-ribose 1-diphosphate + anthranilate. It participates in amino-acid biosynthesis; L-tryptophan biosynthesis; L-tryptophan from chorismate: step 2/5. Functionally, catalyzes the transfer of the phosphoribosyl group of 5-phosphorylribose-1-pyrophosphate (PRPP) to anthranilate to yield N-(5'-phosphoribosyl)-anthranilate (PRA). The chain is Anthranilate phosphoribosyltransferase from Sphingopyxis alaskensis (strain DSM 13593 / LMG 18877 / RB2256) (Sphingomonas alaskensis).